Reading from the N-terminus, the 236-residue chain is Small ribosomal subunit protein uS2c (236 aa).

It belongs to the universal ribosomal protein uS2 family.

It localises to the plastid. The protein resides in the chloroplast. This is Small ribosomal subunit protein uS2c (rps2) from Illicium oligandrum (Star anise).